Reading from the N-terminus, the 120-residue chain is Ribonuclease P protein component 2 (120 aa).

It belongs to the eukaryotic/archaeal RNase P protein component 2 family. Homodimer in solution. Component of RNase P which consists of a catalytic RNA component and at least 5 protein subunits. Forms a heterotetrameric subcomplex with Rnp3. Reconstituted enzyme missing individual protein subunits is suboptimally active, showing each subunit contributes to optimization of activity.

Its subcellular location is the cytoplasm. The catalysed reaction is Endonucleolytic cleavage of RNA, removing 5'-extranucleotides from tRNA precursor.. Its function is as follows. Part of ribonuclease P, a protein complex that generates mature tRNA molecules by cleaving their 5'-ends. The protein is Ribonuclease P protein component 2 of Pyrococcus horikoshii (strain ATCC 700860 / DSM 12428 / JCM 9974 / NBRC 100139 / OT-3).